The chain runs to 263 residues: Ycf3-interacting protein 1, chloroplastic (263 aa).

A chloroplast-targeting transit peptide spans methionine 1–tyrosine 71. A helical membrane pass occupies residues alanine 238 to phenylalanine 258.

This sequence belongs to the Y3IP1/CEST family. As to quaternary structure, interacts with Ycf3.

The protein resides in the plastid. The protein localises to the chloroplast thylakoid membrane. Nuclear genome-encoded factor that participates in photosystem I (PSI) biogenesis. Cooperates with the plastid genome-encoded protein PSI assembly Ycf3 in the assembly of stable PSI units in the thylakoid membrane. The sequence is that of Ycf3-interacting protein 1, chloroplastic from Nicotiana tabacum (Common tobacco).